We begin with the raw amino-acid sequence, 308 residues long: Folate transporter 1, chloroplastic (308 aa).

3 Solcar repeats span residues 4 to 94, 104 to 192, and 213 to 299; these read SWQW…AKQR, LSPA…LRKI, and ADYA…VLKL. The next 6 helical transmembrane spans lie at 10–30, 74–91, 110–130, 164–184, 216–236, and 274–293; these read ATAG…LDVV, VIGS…YGRA, LASA…IWLV, ALYK…IQFT, AALG…FQVI, and GLTA…FIVY.

It belongs to the mitochondrial carrier (TC 2.A.29) family. In terms of tissue distribution, ubiquitous.

Its subcellular location is the plastid. The protein localises to the chloroplast membrane. Mediates folate import into chloroplast. This Arabidopsis thaliana (Mouse-ear cress) protein is Folate transporter 1, chloroplastic (FOLT1).